The sequence spans 707 residues: Dendrin (707 aa).

5 disordered regions span residues 1–22, 67–86, 94–195, 213–273, and 342–377; these read MLDG…DEES, QNRT…RRPW, ATNW…PWGG, AGTA…KKRL, and TEVA…GSEE. The stretch at 103-134 forms a coiled coil; it reads AEVRAREQEKRKAASQEREAKETERKRRKAGG. Over residues 105 to 127 the composition is skewed to basic and acidic residues; the sequence is VRAREQEKRKAASQEREAKETER. The nuclear localization stretch occupies residues 113–131; that stretch reads RKAASQEREAKETERKRRK. The interval 186–236 is interaction with MAGI2; the sequence is GVAWAGPWGGRRPGPPSYEAHLLLRGAAGTAPRRRWDRPPPYVAPPSYEGP. The interval 340–434 is interaction with ACTN1; the sequence is PVTEVALSGS…LEVWKVTRRA (95 aa). The segment covering 359–369 has biased composition (basic residues); sequence PRSRQHLRGSR. Ser387 carries the post-translational modification Phosphoserine. Disordered regions lie at residues 389-421 and 517-707; these read KKPP…EGTE and RVLN…GKRE. The tract at residues 406-707 is interaction with CD2AP and NPHS1; it reads GGTGWKESLG…TRKTPQGKRE (302 aa). Composition is skewed to basic and acidic residues over residues 524-544 and 692-707; these read EGRE…EERS and GLVR…GKRE.

As to quaternary structure, forms a ternary complex with MAGI2 and SH3KBP1; recruits DDN to the cytoplasm. Interacts with MAGI1. Interacts with ACTN1 and may interact with WWC1. Interacts with the podocyte slit diaphragm proteins CD2AP, NPHS1 and NPHS2; the interaction with CD2AP and NPHS1 is direct. In terms of tissue distribution, specifically expressed in forebrain structures, particularly in neocortex, olfactory bulb, hippocampus, caudate-putamen, and limbic system (at protein level). Also detected in spleen, liver, kidney and placenta (at protein level).

It localises to the cell projection. The protein localises to the dendritic spine membrane. It is found in the cytoplasm. The protein resides in the endoplasmic reticulum membrane. Its subcellular location is the perikaryon. It localises to the nucleus. Functionally, promotes apoptosis of kidney glomerular podocytes. Podocytes are highly specialized cells essential to the ultrafiltration of blood, resulting in the extraction of urine and the retention of protein. The sequence is that of Dendrin (Ddn) from Rattus norvegicus (Rat).